A 165-amino-acid chain; its full sequence is CDP-archaeol synthase (165 aa).

The next 3 helical transmembrane spans lie at 4–24, 78–98, and 118–138; these read IVQL…AVLA, LLDA…GAFV, and FLLM…PLLL.

Belongs to the CDP-archaeol synthase family. Requires Mg(2+) as cofactor.

The protein localises to the cell membrane. It catalyses the reaction 2,3-bis-O-(geranylgeranyl)-sn-glycerol 1-phosphate + CTP + H(+) = CDP-2,3-bis-O-(geranylgeranyl)-sn-glycerol + diphosphate. It participates in membrane lipid metabolism; glycerophospholipid metabolism. Functionally, catalyzes the formation of CDP-2,3-bis-(O-geranylgeranyl)-sn-glycerol (CDP-archaeol) from 2,3-bis-(O-geranylgeranyl)-sn-glycerol 1-phosphate (DGGGP) and CTP. This reaction is the third ether-bond-formation step in the biosynthesis of archaeal membrane lipids. The chain is CDP-archaeol synthase from Pyrobaculum calidifontis (strain DSM 21063 / JCM 11548 / VA1).